The primary structure comprises 72 residues: Translational regulator CsrA (72 aa).

The protein belongs to the CsrA/RsmA family. Homodimer; the beta-strands of each monomer intercalate to form a hydrophobic core, while the alpha-helices form wings that extend away from the core.

It localises to the cytoplasm. In terms of biological role, a translational regulator that binds mRNA to regulate translation initiation and/or mRNA stability. Usually binds in the 5'-UTR at or near the Shine-Dalgarno sequence preventing ribosome-binding, thus repressing translation. Its main target seems to be the major flagellin gene, while its function is anatagonized by FliW. This chain is Translational regulator CsrA, found in Clostridium botulinum (strain Loch Maree / Type A3).